Here is a 362-residue protein sequence, read N- to C-terminus: 3-dehydroquinate synthase (362 aa).

Residues 71–76 (DGEKYK), 105–109 (GVIGD), 129–130 (TT), Lys142, Lys151, and 169–172 (CLKT) each bind NAD(+). Residues Glu184, His247, and His264 each coordinate Zn(2+).

Belongs to the sugar phosphate cyclases superfamily. Dehydroquinate synthase family. Co(2+) is required as a cofactor. Zn(2+) serves as cofactor. The cofactor is NAD(+).

It localises to the cytoplasm. It carries out the reaction 7-phospho-2-dehydro-3-deoxy-D-arabino-heptonate = 3-dehydroquinate + phosphate. The protein operates within metabolic intermediate biosynthesis; chorismate biosynthesis; chorismate from D-erythrose 4-phosphate and phosphoenolpyruvate: step 2/7. In terms of biological role, catalyzes the conversion of 3-deoxy-D-arabino-heptulosonate 7-phosphate (DAHP) to dehydroquinate (DHQ). The polypeptide is 3-dehydroquinate synthase (Citrobacter koseri (strain ATCC BAA-895 / CDC 4225-83 / SGSC4696)).